Here is a 323-residue protein sequence, read N- to C-terminus: o-succinylbenzoate synthase (323 aa).

Catalysis depends on K134, which acts as the Proton donor. Mg(2+) contacts are provided by D162, E191, and D214. K236 functions as the Proton acceptor in the catalytic mechanism.

Belongs to the mandelate racemase/muconate lactonizing enzyme family. MenC type 1 subfamily. The cofactor is a divalent metal cation.

It catalyses the reaction (1R,6R)-6-hydroxy-2-succinyl-cyclohexa-2,4-diene-1-carboxylate = 2-succinylbenzoate + H2O. The protein operates within quinol/quinone metabolism; 1,4-dihydroxy-2-naphthoate biosynthesis; 1,4-dihydroxy-2-naphthoate from chorismate: step 4/7. It participates in quinol/quinone metabolism; menaquinone biosynthesis. Functionally, converts 2-succinyl-6-hydroxy-2,4-cyclohexadiene-1-carboxylate (SHCHC) to 2-succinylbenzoate (OSB). The sequence is that of o-succinylbenzoate synthase from Yersinia pestis bv. Antiqua (strain Antiqua).